The chain runs to 422 residues: 5-hydroxytryptamine receptor 1A (422 aa).

The interval 1 to 23 (MDVLSPGQGNNTTSPPAPFETGG) is disordered. Residues 1–38 (MDVLSPGQGNNTTSPPAPFETGGNTTGISDVTVSYQVI) lie on the Extracellular side of the membrane. 3 N-linked (GlcNAc...) asparagine glycosylation sites follow: asparagine 10, asparagine 11, and asparagine 24. Residues 39 to 59 (TSLLLGTLIFCAVLGNACVVA) form a helical membrane-spanning segment. At 60 to 73 (AIALERSLQNVANY) the chain is on the cytoplasmic side. Residues 74-98 (LIGSLAVTDLMVSVLVLPMAALYQV) traverse the membrane as a helical segment. Residues 99–107 (LNKWTLGQV) lie on the Extracellular side of the membrane. The chain crosses the membrane as a helical span at residues 108-132 (TCDLFIALDVLCCTSSILHLCAIAL). The cysteines at positions 109 and 187 are disulfide-linked. Serotonin-binding residues include aspartate 116 and cysteine 120. The DRY motif; important for ligand-induced conformation changes signature appears at 133–135 (DRY). Residues 133–152 (DRYWAITDPIDYVNKRTPRR) are Cytoplasmic-facing. A helical membrane pass occupies residues 153–174 (AAALISLTWLIGFLISIPPMLG). At 175-193 (WRTPEDRSDPDACTISKDH) the chain is on the extracellular side. A helical membrane pass occupies residues 194–216 (GYTIYSTFGAFYIPLLLMLVLYG). Over 217 to 346 (RIFRAARFRI…LARERKTVKT (130 aa)) the chain is Cytoplasmic. The tract at residues 235 to 262 (KTGADTRHGASPAPQPKKSVNGESGSRN) is disordered. 4 residues coordinate 1D-myo-inositol 4-phosphate: threonine 314, lysine 345, threonine 346, and glycine 352. A helical transmembrane segment spans residues 347–370 (LGIIMGTFILCWLPFFIVALVLPF). The Extracellular portion of the chain corresponds to 371–378 (CESSCHMP). The helical transmembrane segment at 379 to 403 (TLLGAIINWLGYSNSLLNPVIYAYF) threads the bilayer. Positions 396 to 400 (NPVIY) match the NPxxY motif; important for ligand-induced conformation changes and signaling motif. The 1D-myo-inositol 4-phosphate site is built by phenylalanine 403, asparagine 404, and lysine 405. Residues 404-422 (NKDFQNAFKKIIKCKFCRQ) lie on the Cytoplasmic side of the membrane.

The protein belongs to the G-protein coupled receptor 1 family. 5-hydroxytryptamine receptor subfamily. HTR1A sub-subfamily. Heterodimer; heterodimerizes with GPER1. Interacts with YIF1B. Interacts with GPR39 and GALR1. Detected in lymph nodes, thymus and spleen. Detected in activated T-cells, but not in resting T-cells.

The protein localises to the cell membrane. Its subcellular location is the cell projection. The protein resides in the dendrite. Its activity is regulated as follows. G-protein coupled receptor activity is regulated by lipids: phosphatidylinositol 4-phosphate increases HTR1A-mediated activity. Binding to aripiprazol drug is regulated by cholesterol, which shapes the ligand-binding pocket, determining the specificity for aripiprazol. Activated by IHCH-7179 small molecule: IHCH-7179 acts both as an agonist activator for HTR1A and as an antagonist inhibitor for HTR2A. Activated by SEP-363856 small molecule: IHCH-7179 acts both as an agonist activator for HTR1A and TAAR1. Functionally, G-protein coupled receptor for 5-hydroxytryptamine (serotonin). Also functions as a receptor for various drugs and psychoactive substances. Ligand binding causes a conformation change that triggers signaling via guanine nucleotide-binding proteins (G proteins) and modulates the activity of downstream effectors, such as adenylate cyclase. HTR1A is coupled to G(i)/G(o) G alpha proteins and mediates inhibitory neurotransmission: signaling inhibits adenylate cyclase activity and activates a phosphatidylinositol-calcium second messenger system that regulates the release of Ca(2+) ions from intracellular stores. Beta-arrestin family members regulate signaling by mediating both receptor desensitization and resensitization processes. Plays a role in the regulation of 5-hydroxytryptamine release and in the regulation of dopamine and 5-hydroxytryptamine metabolism. Plays a role in the regulation of dopamine and 5-hydroxytryptamine levels in the brain, and thereby affects neural activity, mood and behavior. Plays a role in the response to anxiogenic stimuli. In Homo sapiens (Human), this protein is 5-hydroxytryptamine receptor 1A.